Consider the following 393-residue polypeptide: Lipid-A-disaccharide synthase (393 aa).

The protein belongs to the LpxB family.

The catalysed reaction is a lipid X + a UDP-2-N,3-O-bis[(3R)-3-hydroxyacyl]-alpha-D-glucosamine = a lipid A disaccharide + UDP + H(+). It participates in bacterial outer membrane biogenesis; LPS lipid A biosynthesis. Condensation of UDP-2,3-diacylglucosamine and 2,3-diacylglucosamine-1-phosphate to form lipid A disaccharide, a precursor of lipid A, a phosphorylated glycolipid that anchors the lipopolysaccharide to the outer membrane of the cell. This chain is Lipid-A-disaccharide synthase, found in Rhodopseudomonas palustris (strain ATCC BAA-98 / CGA009).